The chain runs to 341 residues: Phenylalanine--tRNA ligase alpha subunit (341 aa).

Residue Glu-254 participates in Mg(2+) binding.

Belongs to the class-II aminoacyl-tRNA synthetase family. Phe-tRNA synthetase alpha subunit type 1 subfamily. As to quaternary structure, tetramer of two alpha and two beta subunits. Mg(2+) serves as cofactor.

It is found in the cytoplasm. It carries out the reaction tRNA(Phe) + L-phenylalanine + ATP = L-phenylalanyl-tRNA(Phe) + AMP + diphosphate + H(+). In Mycoplasma genitalium (strain ATCC 33530 / DSM 19775 / NCTC 10195 / G37) (Mycoplasmoides genitalium), this protein is Phenylalanine--tRNA ligase alpha subunit (pheS).